A 309-amino-acid polypeptide reads, in one-letter code: MNAVWIDEAPVAGAATNSLKIERETHKLEKRLCREVGRAIVDYNMIEEGDKVMVCVSGGKDSYAMLDILLKLRARAPIHFDIVAVNLDQKQPGFPEEVLPRYLSELGVDFHIENQDTYSIVKRVIPEGKTTCGLCSRLRRGILYRVADELGATKVALGHHRDDMLQTFFLNMFFAGKLKSMPPKLVSDDGKHIVIRPLAYVAEKDLVRWAQHREFPIIPCTLCGSQENLQRKQVGEMLREWDRKHLGRVENMFTALQNVVPSHLLDGTQHDFKGLKATGVADEDGDKAFDTPSFDLLSQAPAALRILQG.

Positions 57–62 (SGGKDS) match the PP-loop motif motif. The [4Fe-4S] cluster site is built by cysteine 132, cysteine 135, and cysteine 223.

Belongs to the TtcA family. As to quaternary structure, homodimer. The cofactor is Mg(2+). It depends on [4Fe-4S] cluster as a cofactor.

Its subcellular location is the cytoplasm. The catalysed reaction is cytidine(32) in tRNA + S-sulfanyl-L-cysteinyl-[cysteine desulfurase] + AH2 + ATP = 2-thiocytidine(32) in tRNA + L-cysteinyl-[cysteine desulfurase] + A + AMP + diphosphate + H(+). It functions in the pathway tRNA modification. In terms of biological role, catalyzes the ATP-dependent 2-thiolation of cytidine in position 32 of tRNA, to form 2-thiocytidine (s(2)C32). The sulfur atoms are provided by the cysteine/cysteine desulfurase (IscS) system. The polypeptide is tRNA-cytidine(32) 2-sulfurtransferase (Variovorax paradoxus (strain S110)).